We begin with the raw amino-acid sequence, 271 residues long: Insulin-like growth factor-binding protein 5 (271 aa).

An N-terminal signal peptide occupies residues 1 to 19 (MVISVVLLLLAAYAVPAQG). Residues 22 to 102 (SFVHCEPCDE…LHGRGVCLNE (81 aa)) enclose the IGFBP N-terminal domain. Cystine bridges form between Cys-26–Cys-52, Cys-29–Cys-54, Cys-37–Cys-55, Cys-44–Cys-58, Cys-66–Cys-79, and Cys-73–Cys-99. Positions 109–121 (TKIERDSREHEEP) are enriched in basic and acidic residues. Positions 109–129 (TKIERDSREHEEPTTSEMAEE) are disordered. At Ser-115 the chain carries Phosphoserine. The 75-residue stretch at 188 to 262 (QGPCRRHMEA…MEYVDGDFQC (75 aa)) folds into the Thyroglobulin type-1 domain. 3 disulfide bridges follow: Cys-191–Cys-218, Cys-229–Cys-240, and Cys-242–Cys-262.

In terms of assembly, interacts with IGF1; this interaction enhances the growth stimulatory effects of IGF1 on fibroblasts. Interacts with CAV1; this interaction allows trafficking of IGFBP5 from the plasma membrane to the nucleus. Interacts with NCL; this interaction is necessary for IGFBP5 localization to the nucleus. As to expression, most abundant in kidney, uterus and gastrocnemius muscle.

Its subcellular location is the secreted. It localises to the cytoplasm. It is found in the nucleus. Its function is as follows. Multifunctional protein that plays a critical role in regulating the availability of IGFs to their receptors and thereby regulates IGF-mediated cellular processes including proliferation, differentiation, and apoptosis in a cell-type specific manner. Increases the cell proliferation of osteoblasts, intestinal smooth muscle cells and neuroblastoma cells. Enhances adhesion and survival of epithelial cells but decreases adhesion of mesenchymal cells. Once secreted, acts as a major mediator of mTORC1-dependent feedback inhibition of IGF1 signaling. Also plays a role in the induction of extracellular matrix (ECM) production and deposition independently of its nuclear translocation and binding to IGFs. Acts itself as a growth factor that can act independently of IGFs to regulate bone formation. Acts as a ligand for the ROR1 receptor which triggers formation of ROR1/HER2 heterodimer to enhance CREB oncogenic signaling. This chain is Insulin-like growth factor-binding protein 5 (Igfbp5), found in Mus musculus (Mouse).